We begin with the raw amino-acid sequence, 198 residues long: MSSRGHSTLPRTLMAPRMISEGDIGGIAQITSSLFLGRGSVASNRHLLQARGITCIVNATIEIPNFNWPQFEYVKVPLADMPHAPIGLYFDTVADKIHSVSRKHGATLVHCAAGVSRSATLCIAYLMKFHNVCLLEAYNWVKARRPVIRPNVGFWRQLIDYERQLFGKSTVKMVQTPYGIVPDVYEKESRHLMPYWGI.

Positions 26 to 167 constitute a Tyrosine-protein phosphatase domain; it reads GIAQITSSLF…LIDYERQLFG (142 aa). Cysteine 111 functions as the Phosphocysteine intermediate in the catalytic mechanism.

It belongs to the protein-tyrosine phosphatase family. Non-receptor class dual specificity subfamily. In terms of assembly, interacts with CD28.

It carries out the reaction O-phospho-L-tyrosyl-[protein] + H2O = L-tyrosyl-[protein] + phosphate. The catalysed reaction is O-phospho-L-seryl-[protein] + H2O = L-seryl-[protein] + phosphate. It catalyses the reaction O-phospho-L-threonyl-[protein] + H2O = L-threonyl-[protein] + phosphate. In terms of biological role, involved in the inactivation of MAP kinases. Dephosphorylates ERK, JNK and p38 MAP-kinases. Plays a negative role in TCR signaling by dephosphorylating MAP3K7 adapter TAB1 leading to its inactivation. This is Dual specificity protein phosphatase 14 (DUSP14) from Homo sapiens (Human).